Here is a 1382-residue protein sequence, read N- to C-terminus: Hepatocyte growth factor receptor (1382 aa).

Positions 1–24 (MRAPAVLAPGILVLLFTLVQRSCG) are cleaved as a signal peptide. Residues 25-933 (ECKEALVKSE…VIVQPDQNFT (909 aa)) are Extracellular-facing. Residues 27 to 516 (KEALVKSEMN…TGKKITKIPL (490 aa)) form the Sema domain. A glycan (N-linked (GlcNAc...) asparagine) is linked at Asn-45. 4 disulfides stabilise this stretch: Cys-95–Cys-101, Cys-98–Cys-160, Cys-133–Cys-141, and Cys-173–Cys-176. N-linked (GlcNAc...) asparagine glycosylation occurs at Asn-106. Asn-203 and Asn-359 each carry an N-linked (GlcNAc...) asparagine glycan. 2 disulfides stabilise this stretch: Cys-299–Cys-364 and Cys-386–Cys-398. N-linked (GlcNAc...) asparagine glycosylation is found at Asn-400 and Asn-406. Cystine bridges form between Cys-521–Cys-539, Cys-527–Cys-562, Cys-530–Cys-546, and Cys-542–Cys-552. 3 consecutive IPT/TIG domains span residues 564 to 656 (PTIY…FSYV), 658 to 740 (PIIT…FSYQ), and 743 to 837 (PIVY…LIYV). The O-linked (Man) threonine glycan is linked to Thr-583. Asn-608 and Asn-636 each carry an N-linked (GlcNAc...) asparagine glycan. Thr-677 and Thr-762 each carry an O-linked (Man) threonine glycan. 3 N-linked (GlcNAc...) asparagine glycosylation sites follow: Asn-786, Asn-880, and Asn-931. The helical transmembrane segment at 934 to 956 (GLIVGVISISLIVLLLLGLFLWL) threads the bilayer. Residues 957–1382 (KRRKQIKDLG…QDIIDGEGDT (426 aa)) lie on the Cytoplasmic side of the membrane. Position 967 is a phosphoserine (Ser-967). Thr-978 bears the Phosphothreonine mark. Ser-991, Ser-998, and Ser-1001 each carry phosphoserine. Phosphotyrosine is present on Tyr-1004. The Protein kinase domain maps to 1079 to 1346 (VHFNEVIGRG…RISAIFSTFI (268 aa)). Residues 1085-1093 (IGRGHFGCV) and Lys-1111 each bind ATP. Asp-1205 (proton acceptor) is an active-site residue. The interval 1213–1382 (LDEKFTVKVA…QDIIDGEGDT (170 aa)) is interaction with RANBP9. Tyr-1231 carries the phosphotyrosine modification. Phosphotyrosine; by autocatalysis occurs at positions 1235 and 1236. The residue at position 1290 (Thr-1290) is a Phosphothreonine. The interval 1321 to 1360 (WHPKAELRPSFSELVSRISAIFSTFIGEHYVHVNATYVNV) is interaction with MUC20. A phosphotyrosine; by autocatalysis mark is found at Tyr-1350 and Tyr-1357. At Tyr-1366 the chain carries Phosphotyrosine.

The protein belongs to the protein kinase superfamily. Tyr protein kinase family. Heterodimer made of an alpha chain (50 kDa) and a beta chain (145 kDa) which are disulfide linked. Binds PLXNB1. Interacts when phosphorylated with downstream effectors including STAT3, PIK3R1, SRC, PCLG1, GRB2 and GAB1. Interacts with SPSB1, SPSB2 and SPSB4. Interacts with INPP5D/SHIP1. When phosphorylated at Tyr-1357, interacts with INPPL1/SHIP2. Interacts with RANBP9 and RANBP10, as well as SPSB1, SPSB2, SPSB3 and SPSB4. SPSB1 binding occurs in the presence and in the absence of HGF, however HGF treatment has a positive effect on this interaction. Interacts with MUC20; prevents interaction with GRB2 and suppresses hepatocyte growth factor-induced cell proliferation. Interacts with GRB10. Interacts with PTPN1 and PTPN2. Interacts with HSP90AA1 and HSP90AB1; the interaction suppresses MET kinase activity. Interacts with tensin TNS3. Interacts (when phosphorylated) with tensin TNS4 (via SH2 domain); the interaction increases MET protein stability by inhibiting MET endocytosis and subsequent lysosomal degradation. Post-translationally, autophosphorylated in response to ligand binding on Tyr-1235 and Tyr-1236 in the kinase domain leading to further phosphorylation of Tyr-1350 and Tyr-1357 in the C-terminal multifunctional docking site. Dephosphorylated by PTPRJ at Tyr-1350 and Tyr-1366. Dephosphorylated by PTPN1 and PTPN2. In terms of processing, ubiquitinated. Ubiquitination by CBL regulates the receptor stability and activity through proteasomal degradation. O-mannosylation of IPT/TIG domains by TMEM260 is required for protein maturation. O-mannosylated residues are composed of single mannose glycans that are not elongated or modified.

The protein localises to the membrane. The enzyme catalyses L-tyrosyl-[protein] + ATP = O-phospho-L-tyrosyl-[protein] + ADP + H(+). In its inactive state, the C-terminal tail interacts with the catalytic domain and inhibits the kinase activity. Upon ligand binding, the C-terminal tail is displaced and becomes phosphorylated, thus increasing the kinase activity. Receptor tyrosine kinase that transduces signals from the extracellular matrix into the cytoplasm by binding to hepatocyte growth factor/HGF ligand. Regulates many physiological processes including proliferation, scattering, morphogenesis and survival. Ligand binding at the cell surface induces autophosphorylation of MET on its intracellular domain that provides docking sites for downstream signaling molecules. Following activation by ligand, interacts with the PI3-kinase subunit PIK3R1, PLCG1, SRC, GRB2, STAT3 or the adapter GAB1. Recruitment of these downstream effectors by MET leads to the activation of several signaling cascades including the RAS-ERK, PI3 kinase-AKT, or PLCgamma-PKC. The RAS-ERK activation is associated with the morphogenetic effects while PI3K/AKT coordinates prosurvival effects. During embryonic development, MET signaling plays a role in gastrulation, development and migration of muscles and neuronal precursors, angiogenesis and kidney formation. In adults, participates in wound healing as well as organ regeneration and tissue remodeling. Also promotes differentiation and proliferation of hematopoietic cells. This Mustela putorius furo (European domestic ferret) protein is Hepatocyte growth factor receptor (MET).